The following is a 283-amino-acid chain: Pantothenate synthetase (283 aa).

26-33 (MGNLHDGH) provides a ligand contact to ATP. Catalysis depends on H33, which acts as the Proton donor. Q57 contributes to the (R)-pantoate binding site. Q57 is a binding site for beta-alanine. 148–151 (GKKD) contacts ATP. Position 154 (Q154) interacts with (R)-pantoate. ATP is bound by residues A177 and 185–188 (LSSR).

Belongs to the pantothenate synthetase family. As to quaternary structure, homodimer.

Its subcellular location is the cytoplasm. It catalyses the reaction (R)-pantoate + beta-alanine + ATP = (R)-pantothenate + AMP + diphosphate + H(+). It participates in cofactor biosynthesis; (R)-pantothenate biosynthesis; (R)-pantothenate from (R)-pantoate and beta-alanine: step 1/1. Its function is as follows. Catalyzes the condensation of pantoate with beta-alanine in an ATP-dependent reaction via a pantoyl-adenylate intermediate. The protein is Pantothenate synthetase of Delftia acidovorans (strain DSM 14801 / SPH-1).